The chain runs to 175 residues: Peptidyl-prolyl cis-trans isomerase B (175 aa).

Residues 3 to 172 (EQLYATLKTN…EDVVIESVVV (170 aa)) form the PPIase cyclophilin-type domain.

This sequence belongs to the cyclophilin-type PPIase family.

The protein resides in the cytoplasm. The catalysed reaction is [protein]-peptidylproline (omega=180) = [protein]-peptidylproline (omega=0). Inhibited by cyclosporin A (CsA). Its function is as follows. PPIases accelerate the folding of proteins. It catalyzes the cis-trans isomerization of proline imidic peptide bonds in oligopeptides. The polypeptide is Peptidyl-prolyl cis-trans isomerase B (cypB) (Streptomyces anulatus (Streptomyces chrysomallus)).